A 367-amino-acid chain; its full sequence is uncharacterized protein (367 aa).

A run of 4 helical transmembrane segments spans residues I18–G38, V239–G259, I296–I316, and A329–L349.

This sequence belongs to the ABC-4 integral membrane protein family.

Its subcellular location is the cell membrane. This is an uncharacterized protein from Methanocaldococcus jannaschii (strain ATCC 43067 / DSM 2661 / JAL-1 / JCM 10045 / NBRC 100440) (Methanococcus jannaschii).